The chain runs to 443 residues: Thymidine phosphorylase (443 aa).

Belongs to the thymidine/pyrimidine-nucleoside phosphorylase family. Homodimer.

It carries out the reaction thymidine + phosphate = 2-deoxy-alpha-D-ribose 1-phosphate + thymine. Its pathway is pyrimidine metabolism; dTMP biosynthesis via salvage pathway; dTMP from thymine: step 1/2. Its function is as follows. The enzymes which catalyze the reversible phosphorolysis of pyrimidine nucleosides are involved in the degradation of these compounds and in their utilization as carbon and energy sources, or in the rescue of pyrimidine bases for nucleotide synthesis. This chain is Thymidine phosphorylase, found in Sodalis glossinidius (strain morsitans).